A 976-amino-acid chain; its full sequence is Chitin synthase 3A (976 aa).

Positions 29-72 are disordered; that stretch reads DDANASNRSPVSNPYEPDYDQLSPPPMLGAQRPVPEQNESSRDL. The segment covering 31–40 has biased composition (polar residues); the sequence is ANASNRSPVS. Residues N32, N66, N95, and N602 are each glycosylated (N-linked (GlcNAc...) asparagine). Helical transmembrane passes span 639–659, 684–704, 717–737, 773–793, 801–821, 903–923, and 944–964; these read LLNV…TTII, IVNV…FVLA, VLSF…TGYL, LIII…FLYL, SFPQ…VYAF, TGLV…VTTD, and FLLY…LWFI.

It belongs to the chitin synthase family. Class III subfamily.

It is found in the cell membrane. It catalyses the reaction [(1-&gt;4)-N-acetyl-beta-D-glucosaminyl](n) + UDP-N-acetyl-alpha-D-glucosamine = [(1-&gt;4)-N-acetyl-beta-D-glucosaminyl](n+1) + UDP + H(+). Functionally, polymerizes chitin, a structural polymer of the cell wall and septum, by transferring the sugar moiety of UDP-GlcNAc to the non-reducing end of the growing chitin polymer. Shows additive effects in septum formation with CHS1, CHS2, CHS4, CHS5, CHS6 and CHS7. Involved in virulence and mediates mycotoxin deoxinivalenol (DON) biosynthesis via the regulation of the expression of TRI4, TRI5 and TRI6. The protein is Chitin synthase 3A of Gibberella zeae (strain ATCC MYA-4620 / CBS 123657 / FGSC 9075 / NRRL 31084 / PH-1) (Wheat head blight fungus).